Reading from the N-terminus, the 280-residue chain is Energy-coupling factor transporter ATP-binding protein EcfA2 (280 aa).

An ABC transporter domain is found at 3-245 (ISLENVSYTY…VAFLKEKQLG (243 aa)). 40-47 (GHTGSGKS) lines the ATP pocket.

Belongs to the ABC transporter superfamily. Energy-coupling factor EcfA family. As to quaternary structure, forms a stable energy-coupling factor (ECF) transporter complex composed of 2 membrane-embedded substrate-binding proteins (S component), 2 ATP-binding proteins (A component) and 2 transmembrane proteins (T component).

The protein localises to the cell membrane. Functionally, ATP-binding (A) component of a common energy-coupling factor (ECF) ABC-transporter complex. Unlike classic ABC transporters this ECF transporter provides the energy necessary to transport a number of different substrates. This chain is Energy-coupling factor transporter ATP-binding protein EcfA2, found in Streptococcus thermophilus (strain CNRZ 1066).